Reading from the N-terminus, the 294-residue chain is Cytidine deaminase (294 aa).

CMP/dCMP-type deaminase domains are found at residues 48 to 168 (DEDA…FGPK) and 186 to 294 (VSGD…VLLG). Residue 89-91 (NME) participates in substrate binding. H102 is a binding site for Zn(2+). E104 serves as the catalytic Proton donor. Zn(2+) contacts are provided by C129 and C132.

Belongs to the cytidine and deoxycytidylate deaminase family. In terms of assembly, homodimer. It depends on Zn(2+) as a cofactor.

It catalyses the reaction cytidine + H2O + H(+) = uridine + NH4(+). The catalysed reaction is 2'-deoxycytidine + H2O + H(+) = 2'-deoxyuridine + NH4(+). Functionally, this enzyme scavenges exogenous and endogenous cytidine and 2'-deoxycytidine for UMP synthesis. The chain is Cytidine deaminase from Klebsiella pneumoniae (strain 342).